The primary structure comprises 503 residues: MKERIKDKAWRPQFIKLNNPDTSKKIVSQKSKKPEIVDLSSPGNNDLVTISILCVLLCFQLAISLNPHSGESQPPMYGDYEAQRHWMEITVNLPIEQWYLNGTHNDLLYWGLDYPPITAYHHYLLGVISNKINKKWVELTTSRGYESIAHKLFMRLSAIIPFYIFYLPPLIFYFTRSKKMSPILYALALLYPSLLVIDNGHFQYNSISLGLFLATYMFLTKNFTIIGSILFVAALNYKQMELYHALPVFVFILARSINKTQLFNSFRRILTIGLFVVGTFLIIWLPFLLTGTAKDVIIRVFPFNRGLYEDKVASFWCAFSFILKRLPLQSVQIYISTALVLAGSAPSLLVLFLRPTEKQFRISLTATGLSFFLFSFHVHEKTILLAAVPALLLISEYTSLVIWFLNITNISIFSLCVKDNFALSLSFFFAYFVVSYAYTAPRKISHILTILIGFAICILELYGPSNQRFPHIYQLANAFFSCVHFIYFLLYLSFASFEKTKKE.

Over 1–46 (MKERIKDKAWRPQFIKLNNPDTSKKIVSQKSKKPEIVDLSSPGNND) the chain is Cytoplasmic. The helical transmembrane segment at 47 to 67 (LVTISILCVLLCFQLAISLNP) threads the bilayer. Over 68–151 (HSGESQPPMY…SRGYESIAHK (84 aa)) the chain is Lumenal. The chain crosses the membrane as a helical span at residues 152-172 (LFMRLSAIIPFYIFYLPPLIF). At 173–181 (YFTRSKKMS) the chain is on the cytoplasmic side. Residues 182-202 (PILYALALLYPSLLVIDNGHF) traverse the membrane as a helical segment. Residues 203–211 (QYNSISLGL) lie on the Lumenal side of the membrane. The chain crosses the membrane as a helical span at residues 212 to 232 (FLATYMFLTKNFTIIGSILFV). Residues 233–239 (AALNYKQ) are Cytoplasmic-facing. The chain crosses the membrane as a helical span at residues 240–257 (MELYHALPVFVFILARSI). Topologically, residues 258–268 (NKTQLFNSFRR) are lumenal. Residues 269 to 289 (ILTIGLFVVGTFLIIWLPFLL) traverse the membrane as a helical segment. The Cytoplasmic segment spans residues 290–332 (TGTAKDVIIRVFPFNRGLYEDKVASFWCAFSFILKRLPLQSVQ). A helical transmembrane segment spans residues 333–353 (IYISTALVLAGSAPSLLVLFL). Topologically, residues 354 to 359 (RPTEKQ) are lumenal. Residues 360 to 379 (FRISLTATGLSFFLFSFHVH) traverse the membrane as a helical segment. At 380-382 (EKT) the chain is on the cytoplasmic side. Residues 383–403 (ILLAAVPALLLISEYTSLVIW) traverse the membrane as a helical segment. Residues 404 to 420 (FLNITNISIFSLCVKDN) lie on the Lumenal side of the membrane. Residues 421–441 (FALSLSFFFAYFVVSYAYTAP) form a helical membrane-spanning segment. At 442–443 (RK) the chain is on the cytoplasmic side. The chain crosses the membrane as a helical span at residues 444-464 (ISHILTILIGFAICILELYGP). Residues 465–474 (SNQRFPHIYQ) are Lumenal-facing. The chain crosses the membrane as a helical span at residues 475 to 495 (LANAFFSCVHFIYFLLYLSFA). Over 496–503 (SFEKTKKE) the chain is Cytoplasmic.

The protein belongs to the ALG6/ALG8 glucosyltransferase family.

The protein localises to the endoplasmic reticulum membrane. The catalysed reaction is an alpha-D-Man-(1-&gt;2)-alpha-D-Man-(1-&gt;2)-alpha-D-Man-(1-&gt;3)-[alpha-D-Man-(1-&gt;2)-alpha-D-Man-(1-&gt;3)-[alpha-D-Man-(1-&gt;2)-alpha-D-Man-(1-&gt;6)]-alpha-D-Man-(1-&gt;6)]-beta-D-Man-(1-&gt;4)-beta-D-GlcNAc-(1-&gt;4)-alpha-D-GlcNAc-diphospho-di-trans,poly-cis-dolichol + a di-trans,poly-cis-dolichyl beta-D-glucosyl phosphate = an alpha-D-Glc-(1-&gt;3)-alpha-D-Man-(1-&gt;2)-alpha-D-Man-(1-&gt;2)-alpha-D-Man-(1-&gt;3)-[alpha-D-Man-(1-&gt;2)-alpha-D-Man-(1-&gt;3)-[alpha-D-Man-(1-&gt;2)-alpha-D-Man-(1-&gt;6)]-alpha-D-Man-(1-&gt;6)]-beta-D-Man-(1-&gt;4)-beta-D-GlcNAc-(1-&gt;4)-alpha-D-GlcNAc-diphospho-di-trans,poly-cis-dolichol + a di-trans,poly-cis-dolichyl phosphate + H(+). It participates in protein modification; protein glycosylation. Adds the first glucose residue to the lipid-linked oligosaccharide precursor for N-linked glycosylation. Transfers glucose from dolichyl phosphate glucose (Dol-P-Glc) onto the lipid-linked oligosaccharide Man(9)GlcNAc(2)-PP-Dol. The chain is Probable dolichyl pyrophosphate Man9GlcNAc2 alpha-1,3-glucosyltransferase from Caenorhabditis elegans.